A 411-amino-acid polypeptide reads, in one-letter code: Protein translocase subunit SecY (411 aa).

10 consecutive transmembrane segments (helical) span residues Ile-11–Gly-31, Ile-52–Ile-72, Ala-111–Phe-131, Phe-135–Leu-155, Gly-163–Leu-180, Ser-197–Val-217, Val-253–Ile-273, Leu-291–Val-311, Thr-349–Val-369, and Gly-377–Ile-397.

This sequence belongs to the SecY/SEC61-alpha family. As to quaternary structure, component of the plastid Sec protein translocase complex, which is composed of at least SecY, SecE and SecG.

It is found in the plastid. It localises to the chloroplast thylakoid membrane. Its function is as follows. The central subunit of the protein translocation channel SecYE. Consists of two halves formed by TMs 1-5 and 6-10. These two domains form a lateral gate at the front which open onto the bilayer between TMs 2 and 7, and are clamped together by SecE at the back. The channel is closed by both a pore ring composed of hydrophobic SecY resides and a short helix (helix 2A) on the extracellular side of the membrane which forms a plug. The polypeptide is Protein translocase subunit SecY (Pyropia yezoensis (Susabi-nori)).